The chain runs to 727 residues: Sodium-dependent neutral amino acid transporter SLC6A17 (727 aa).

The Cytoplasmic segment spans residues 1–68 (MPKNSKVTQR…DRPAWNSKLQ (68 aa)). Phosphoserine is present on residues serine 13 and serine 20. The helical transmembrane segment at 69–89 (YILAQIGFSVGLGNIWRFPYL) threads the bilayer. Residues 90 to 96 (CQKNGGG) lie on the Extracellular side of the membrane. The chain crosses the membrane as a helical span at residues 97–116 (AYLVPYLVLLIIIGIPLFFL). Residues 117–140 (ELAVGQRIRRGSIGVWHYVCPRLG) lie on the Cytoplasmic side of the membrane. A helical transmembrane segment spans residues 141–161 (GIGFSSCIVCLFVGLYYNVII). Residues 162–224 (GWSVFYFFKS…NSISESGGLN (63 aa)) are Extracellular-facing. Asparagine 186 is a glycosylation site (N-linked (GlcNAc...) asparagine). A helical membrane pass occupies residues 225-243 (WKMTLCLLVAWSIVGMAVV). At 244-251 (KGIQSSGK) the chain is on the cytoplasmic side. The chain crosses the membrane as a helical span at residues 252 to 269 (VMYFSSLFPYVVLACFLV). The Extracellular segment spans residues 270–304 (RGLLLRGAVDGILHMFTPKLDKMLDPQVWREAATQ). The chain crosses the membrane as a helical span at residues 305 to 322 (VFFALGLGFGGVIAFSSY). Residues 323–333 (NKQDNNCHFDA) are Cytoplasmic-facing. Residues 334 to 355 (ALVSFINFFTSVLATLVVFAVL) traverse the membrane as a helical segment. Residues 356-451 (GFKANIMNEK…FIAFTEAMTH (96 aa)) lie on the Extracellular side of the membrane. Phosphotyrosine is present on tyrosine 377. N-linked (GlcNAc...) asparagine glycosylation is present at asparagine 393. The helical transmembrane segment at 452-471 (FPASPFWSVMFFLMLINLGL) threads the bilayer. The Cytoplasmic segment spans residues 472–494 (GSMIGTMAGITTPIIDTFKVPKE). The chain crosses the membrane as a helical span at residues 495–513 (MFTVGCCVFAFFVGLLFVQ). The Extracellular segment spans residues 514 to 528 (RSGNYFVTMFDDYSA). The helical transmembrane segment at 529-549 (TLPLTVIVILENIAVAWIYGT) threads the bilayer. Residues 550–569 (KKFMQELTEMLGFQPYRFYF) are Cytoplasmic-facing. Residues 570–591 (YMWKFVSPLCMAVLTTASIIQL) form a helical membrane-spanning segment. At 592-618 (GVSPPGYSAWIKEEAAERYLYFPNWAM) the chain is on the extracellular side. A helical transmembrane segment spans residues 619-641 (ALLITLIAVATLPIPVVFILRHF). Residues 642–727 (HLLSDGSNTL…LLASTPESEL (86 aa)) are Cytoplasmic-facing. Residues serine 665 and serine 701 each carry the phosphoserine modification. The disordered stretch occupies residues 680–727 (VPSEAPSPMPTHRSYLGPGSTSPLDNSNNPNGRYGSGYLLASTPESEL). The span at 698–710 (GSTSPLDNSNNPN) shows a compositional bias: polar residues.

This sequence belongs to the sodium:neurotransmitter symporter (SNF) (TC 2.A.22) family. As to expression, expressed in the brain. The strongest expression levels in embryonic, postnatal, and adult stages are found in both cortical and hippocampal tissues.

The protein localises to the cytoplasmic vesicle. The protein resides in the secretory vesicle. It is found in the synaptic vesicle membrane. Its subcellular location is the postsynapse. It localises to the presynapse. It catalyses the reaction L-proline(in) + Na(+)(in) = L-proline(out) + Na(+)(out). The catalysed reaction is L-leucine(in) + Na(+)(in) = L-leucine(out) + Na(+)(out). It carries out the reaction glycine(in) + Na(+)(in) = glycine(out) + Na(+)(out). The enzyme catalyses L-alanine(in) + Na(+)(in) = L-alanine(out) + Na(+)(out). It catalyses the reaction L-glutamine(in) + Na(+)(in) = L-glutamine(out) + Na(+)(out). Its function is as follows. Synaptic vesicle transporter with apparent selectivity for neutral amino acids. The transport is sodium-coupled but chloride-independent, likely driven by the proton electrochemical gradient generated by vacuolar H(+)-ATPase in an overall electrogenic mechanism. May contribute to the synaptic uptake of neurotransmitter precursors in a process coupled in part to vesicle exocytosis. This is Sodium-dependent neutral amino acid transporter SLC6A17 from Mus musculus (Mouse).